The sequence spans 430 residues: Synaptotagmin-11 (430 aa).

Topologically, residues 1 to 15 (MAEITNIRPSFDVSP) are vesicular. The chain crosses the membrane as a helical span at residues 16–36 (VAAGLIGASVLVVCVSVTVFV). Residues 37–430 (WTCCHQQAEK…VAKWHSLSEY (394 aa)) are Cytoplasmic-facing. A disordered region spans residues 132–154 (RSPMTSLTPGESKPTSPSSPEED). Position 133 is a phosphoserine (serine 133). Positions 140–150 (PGESKPTSPSS) are enriched in low complexity. 2 C2 domains span residues 156–278 (MLGS…QLTR) and 290–425 (SRGE…AKWH). Aspartate 249, serine 252, and aspartate 255 together coordinate Ca(2+).

Belongs to the synaptotagmin family. Homodimer. Can also form heterodimers. Interacts with PRKN. Interacts (via C2 2 domain) with AGO2 and SND1; the interaction with SND1 is direct. Interacts with KIF1A; the interaction increases in presence of calcium. It depends on Ca(2+) as a cofactor. Post-translationally, ubiquitinated, at least by PRKN, and targeted to the proteasome complex for degradation. Ubiquitination is inhibited by ATP13A2. As to expression, highly expressed in brain and at lower levels in other tissues.

The protein localises to the cytoplasmic vesicle membrane. Its subcellular location is the perikaryon. It is found in the golgi apparatus. The protein resides in the trans-Golgi network membrane. It localises to the recycling endosome membrane. The protein localises to the lysosome membrane. Its subcellular location is the cytoplasmic vesicle. It is found in the phagosome. The protein resides in the cell projection. It localises to the axon. The protein localises to the dendrite. Its subcellular location is the postsynaptic density. It is found in the clathrin-coated vesicle membrane. Its function is as follows. Synaptotagmin family member involved in vesicular and membrane trafficking which does not bind Ca(2+). Inhibits clathrin-mediated and bulk endocytosis in neurons, functions to ensure precision in vesicle retrieval. Plays an important role in dopamine transmission by regulating endocytosis and the vesicle-recycling process. Essential component of a neuronal vesicular trafficking pathway that differs from the synaptic vesicle trafficking pathway but is crucial for development and synaptic plasticity. In macrophages and microglia, inhibits the conventional cytokine secretion, of at least IL6 and TNF, and phagocytosis. In astrocytes, regulates lysosome exocytosis, mechanism required for the repair of injured astrocyte cell membrane. Required for the ATP13A2-mediated regulation of the autophagy-lysosome pathway. The polypeptide is Synaptotagmin-11 (Rattus norvegicus (Rat)).